A 369-amino-acid polypeptide reads, in one-letter code: UPF0284 protein AM1_5137 (369 aa).

The protein belongs to the UPF0284 family.

The chain is UPF0284 protein AM1_5137 from Acaryochloris marina (strain MBIC 11017).